A 776-amino-acid polypeptide reads, in one-letter code: Homoaconitase, mitochondrial (776 aa).

Residues 1–38 (MQSRLVSQSGLGRRWAVLRCALSKTYQRRTLTSTRRQF) constitute a mitochondrion transit peptide. [4Fe-4S] cluster is bound by residues Cys-394, Cys-463, and Cys-466.

The protein belongs to the aconitase/IPM isomerase family. The cofactor is [4Fe-4S] cluster.

It is found in the mitochondrion. The enzyme catalyses (2R,3S)-homoisocitrate = cis-homoaconitate + H2O. It participates in amino-acid biosynthesis; L-lysine biosynthesis via AAA pathway; L-alpha-aminoadipate from 2-oxoglutarate: step 3/5. Catalyzes the reversible hydration of cis-homoaconitate to (2R,3S)-homoisocitrate, a step in the alpha-aminoadipate pathway for lysine biosynthesis. The chain is Homoaconitase, mitochondrial (lys4) from Emericella nidulans (strain FGSC A4 / ATCC 38163 / CBS 112.46 / NRRL 194 / M139) (Aspergillus nidulans).